We begin with the raw amino-acid sequence, 22 residues long: Caerin-3.3 (22 aa).

Lys-22 bears the Lysine amide mark.

Expressed by the skin parotoid and/or rostral glands.

The protein localises to the secreted. Its function is as follows. Antibacterial peptide, that adopts an alpha helical conformation which can disrupt bacterial membranes. Each caerin displays a different antimicrobial specificity. The polypeptide is Caerin-3.3 (Ranoidea caerulea (Green tree frog)).